We begin with the raw amino-acid sequence, 475 residues long: 3-isopropylmalate dehydratase large subunit 1 (475 aa).

[4Fe-4S] cluster contacts are provided by cysteine 353, cysteine 413, and cysteine 416.

The protein belongs to the aconitase/IPM isomerase family. LeuC type 1 subfamily. As to quaternary structure, heterodimer of LeuC and LeuD. The cofactor is [4Fe-4S] cluster.

It carries out the reaction (2R,3S)-3-isopropylmalate = (2S)-2-isopropylmalate. Its pathway is amino-acid biosynthesis; L-leucine biosynthesis; L-leucine from 3-methyl-2-oxobutanoate: step 2/4. Functionally, catalyzes the isomerization between 2-isopropylmalate and 3-isopropylmalate, via the formation of 2-isopropylmaleate. This is 3-isopropylmalate dehydratase large subunit 1 from Mannheimia succiniciproducens (strain KCTC 0769BP / MBEL55E).